Consider the following 70-residue polypeptide: Large ribosomal subunit protein eL38 (70 aa).

Belongs to the eukaryotic ribosomal protein eL38 family.

The polypeptide is Large ribosomal subunit protein eL38 (RpL38) (Spodoptera frugiperda (Fall armyworm)).